A 379-amino-acid chain; its full sequence is Homoserine O-succinyltransferase (379 aa).

The 310-residue stretch at 51 to 360 (NAVLICHALS…DAPQGHDAFL (310 aa)) folds into the AB hydrolase-1 domain. Serine 157 functions as the Nucleophile in the catalytic mechanism. Arginine 227 contacts substrate. Catalysis depends on residues aspartate 323 and histidine 356. Substrate is bound at residue aspartate 357.

The protein belongs to the AB hydrolase superfamily. MetX family. In terms of assembly, homodimer.

Its subcellular location is the cytoplasm. It carries out the reaction L-homoserine + succinyl-CoA = O-succinyl-L-homoserine + CoA. The protein operates within amino-acid biosynthesis; L-methionine biosynthesis via de novo pathway; O-succinyl-L-homoserine from L-homoserine: step 1/1. In terms of biological role, transfers a succinyl group from succinyl-CoA to L-homoserine, forming succinyl-L-homoserine. This chain is Homoserine O-succinyltransferase, found in Pseudomonas fluorescens (strain SBW25).